The following is a 601-amino-acid chain: Elongation factor 4 (601 aa).

A tr-type G domain is found at 6–188; it reads SHIRNFSIIA…QIVHRVPPPE (183 aa). GTP contacts are provided by residues 18–23 and 135–138; these read DHGKST and NKID.

The protein belongs to the TRAFAC class translation factor GTPase superfamily. Classic translation factor GTPase family. LepA subfamily.

It localises to the cell inner membrane. The catalysed reaction is GTP + H2O = GDP + phosphate + H(+). In terms of biological role, required for accurate and efficient protein synthesis under certain stress conditions. May act as a fidelity factor of the translation reaction, by catalyzing a one-codon backward translocation of tRNAs on improperly translocated ribosomes. Back-translocation proceeds from a post-translocation (POST) complex to a pre-translocation (PRE) complex, thus giving elongation factor G a second chance to translocate the tRNAs correctly. Binds to ribosomes in a GTP-dependent manner. This Anaeromyxobacter dehalogenans (strain 2CP-C) protein is Elongation factor 4.